The following is a 535-amino-acid chain: CTP synthase (535 aa).

Residues 1–267 (MTKFIFVTGG…DDIVIQRLQL (267 aa)) form an amidoligase domain region. Position 13 (Ser13) interacts with CTP. UTP is bound at residue Ser13. Residue 14 to 19 (SLGKGI) coordinates ATP. Tyr54 is a binding site for L-glutamine. Residue Asp71 coordinates ATP. Mg(2+) is bound by residues Asp71 and Glu141. Residues 148–150 (DIE), 188–193 (KTKPTQ), and Lys224 contribute to the CTP site. Residues 188-193 (KTKPTQ) and Lys224 contribute to the UTP site. Residue 240 to 242 (RDA) participates in ATP binding. Positions 293 to 535 (TIGLVGKYVS…VEAALNYQQK (243 aa)) constitute a Glutamine amidotransferase type-1 domain. Residue Gly355 participates in L-glutamine binding. Cys382 acts as the Nucleophile; for glutamine hydrolysis in catalysis. L-glutamine is bound by residues 383–386 (LGMQ), Glu406, and Arg463. Catalysis depends on residues His508 and Glu510.

This sequence belongs to the CTP synthase family. As to quaternary structure, homotetramer.

It catalyses the reaction UTP + L-glutamine + ATP + H2O = CTP + L-glutamate + ADP + phosphate + 2 H(+). The catalysed reaction is L-glutamine + H2O = L-glutamate + NH4(+). The enzyme catalyses UTP + NH4(+) + ATP = CTP + ADP + phosphate + 2 H(+). It participates in pyrimidine metabolism; CTP biosynthesis via de novo pathway; CTP from UDP: step 2/2. Allosterically activated by GTP, when glutamine is the substrate; GTP has no effect on the reaction when ammonia is the substrate. The allosteric effector GTP functions by stabilizing the protein conformation that binds the tetrahedral intermediate(s) formed during glutamine hydrolysis. Inhibited by the product CTP, via allosteric rather than competitive inhibition. Its function is as follows. Catalyzes the ATP-dependent amination of UTP to CTP with either L-glutamine or ammonia as the source of nitrogen. Regulates intracellular CTP levels through interactions with the four ribonucleotide triphosphates. The polypeptide is CTP synthase (Staphylococcus epidermidis (strain ATCC 35984 / DSM 28319 / BCRC 17069 / CCUG 31568 / BM 3577 / RP62A)).